The chain runs to 376 residues: UPF0754 membrane protein Sca_1420 (376 aa).

2 consecutive transmembrane segments (helical) span residues 4–24 (FLVILFMIVIGALIGGITNII) and 356–376 (LLGFLLGGIIGCLQGIIALFV).

This sequence belongs to the UPF0754 family.

It is found in the cell membrane. The sequence is that of UPF0754 membrane protein Sca_1420 from Staphylococcus carnosus (strain TM300).